Reading from the N-terminus, the 598-residue chain is Auxin response factor 22 (598 aa).

Residues 124–226 constitute a DNA-binding region (TF-B3); sequence NSFTKVLTAS…ELRVGIRRAG (103 aa). The region spanning 509 to 590 is the PB1 domain; that stretch reads RTCTKVQMQG…MVKKILIFKR (82 aa).

It belongs to the ARF family. As to quaternary structure, homodimers and heterodimers.

The protein resides in the nucleus. In terms of biological role, auxin response factors (ARFs) are transcriptional factors that bind specifically to the DNA sequence 5'-TGTCTC-3' found in the auxin-responsive promoter elements (AuxREs). Could act as transcriptional activator or repressor. Formation of heterodimers with Aux/IAA proteins may alter their ability to modulate early auxin response genes expression. This chain is Auxin response factor 22 (ARF22), found in Arabidopsis thaliana (Mouse-ear cress).